Reading from the N-terminus, the 216-residue chain is Methylthioribulose-1-phosphate dehydratase (216 aa).

Zn(2+)-binding residues include His-101 and His-103.

The protein belongs to the aldolase class II family. MtnB subfamily. The cofactor is Zn(2+).

The enzyme catalyses 5-(methylsulfanyl)-D-ribulose 1-phosphate = 5-methylsulfanyl-2,3-dioxopentyl phosphate + H2O. The protein operates within amino-acid biosynthesis; L-methionine biosynthesis via salvage pathway; L-methionine from S-methyl-5-thio-alpha-D-ribose 1-phosphate: step 2/6. Its function is as follows. Catalyzes the dehydration of methylthioribulose-1-phosphate (MTRu-1-P) into 2,3-diketo-5-methylthiopentyl-1-phosphate (DK-MTP-1-P). This chain is Methylthioribulose-1-phosphate dehydratase, found in Bradyrhizobium sp. (strain BTAi1 / ATCC BAA-1182).